Here is a 366-residue protein sequence, read N- to C-terminus: DNA integrity scanning protein DisA (366 aa).

The 139-residue stretch at 21-159 (VHTLKGTLQR…EGKAHMLEQP (139 aa)) folds into the DAC domain. ATP contacts are provided by residues Gly-88, Leu-106, and 119–123 (TRHRS).

The protein belongs to the DisA family. Homooctamer. It depends on Mg(2+) as a cofactor.

It catalyses the reaction 2 ATP = 3',3'-c-di-AMP + 2 diphosphate. Its function is as follows. Participates in a DNA-damage check-point. DisA forms globular foci that rapidly scan along the chromosomes searching for lesions. Also has diadenylate cyclase activity, catalyzing the condensation of 2 ATP molecules into cyclic di-AMP (c-di-AMP). c-di-AMP likely acts as a signaling molecule that may couple DNA integrity with a cellular process. The polypeptide is DNA integrity scanning protein DisA (Corynebacterium glutamicum (strain R)).